The sequence spans 305 residues: Olfactory receptor 9G9 (305 aa).

Residues 1–27 (MQRSNHTVTEFILLGFTTDPGMQLGLF) lie on the Extracellular side of the membrane. The N-linked (GlcNAc...) asparagine glycan is linked to asparagine 5. The helical transmembrane segment at 28–48 (VVFLGVYSLTVVGNSTLIVLI) threads the bilayer. The Cytoplasmic portion of the chain corresponds to 49 to 64 (CNDSHLHTPMYFVVGN). A helical transmembrane segment spans residues 65–85 (LSFLDLWYSSVYTPKILVICI). The Extracellular portion of the chain corresponds to 86–96 (SEDKSISFAGC). Residues cysteine 96 and cysteine 178 are joined by a disulfide bond. A helical transmembrane segment spans residues 97-117 (LCQFFFSAGLAYSECCLLAAM). Topologically, residues 118–138 (AYDRYVAISKPLLYAQAMSIK) are cytoplasmic. The chain crosses the membrane as a helical span at residues 139 to 159 (LCALLVAVSYCGGFINSSIIT). Residues 160-200 (KKTFSFNFCCENIIDDFFCDLLPLVKLACGEKGCYKFLMYF) are Extracellular-facing. The chain crosses the membrane as a helical span at residues 201 to 221 (LLASNVICPAVLILASYLFII). Over 222–239 (TSVLRISSSQGRLKAFST) the chain is Cytoplasmic. A helical transmembrane segment spans residues 240–260 (CSSHLTSVTLYYGSILYIYAL). At 261–271 (PRSSYSFDMDK) the chain is on the extracellular side. Residues 272 to 291 (IVSTFYTEVLPMLNPMIYSL) traverse the membrane as a helical segment. Over 292-305 (RNKDVKEALKKLLP) the chain is Cytoplasmic.

It belongs to the G-protein coupled receptor 1 family.

The protein localises to the cell membrane. In terms of biological role, odorant receptor. This chain is Olfactory receptor 9G9 (OR9G9), found in Homo sapiens (Human).